Consider the following 269-residue polypeptide: Intermembrane phospholipid transport system ATP-binding protein MlaF (269 aa).

The region spanning Val-9 to Asp-245 is the ABC transporter domain. An ATP-binding site is contributed by Gly-41–Thr-48.

This sequence belongs to the ABC transporter superfamily. MlaF family. The complex is composed of two ATP-binding proteins (MlaF), two transmembrane proteins (MlaE), two cytoplasmic solute-binding proteins (MlaB) and six periplasmic solute-binding proteins (MlaD).

It is found in the cell inner membrane. In terms of biological role, part of the ABC transporter complex MlaFEDB, which is involved in a phospholipid transport pathway that maintains lipid asymmetry in the outer membrane by retrograde trafficking of phospholipids from the outer membrane to the inner membrane. Responsible for energy coupling to the transport system. The protein is Intermembrane phospholipid transport system ATP-binding protein MlaF of Escherichia coli O157:H7.